A 247-amino-acid polypeptide reads, in one-letter code: Cell division protein ZapD (247 aa).

It belongs to the ZapD family. Interacts with FtsZ.

The protein localises to the cytoplasm. Its function is as follows. Cell division factor that enhances FtsZ-ring assembly. Directly interacts with FtsZ and promotes bundling of FtsZ protofilaments, with a reduction in FtsZ GTPase activity. This is Cell division protein ZapD from Escherichia coli O139:H28 (strain E24377A / ETEC).